Here is a 102-residue protein sequence, read N- to C-terminus: Protein isd11 (102 aa).

Belongs to the complex I LYR family.

It localises to the mitochondrion. Its function is as follows. Required for mitochondrial iron-sulfur (Fe-S) protein biosynthesis. The protein is Protein isd11 (isd11) of Schizosaccharomyces pombe (strain 972 / ATCC 24843) (Fission yeast).